Here is a 178-residue protein sequence, read N- to C-terminus: Large ribosomal subunit protein bL17 (178 aa).

Low complexity-rich tracts occupy residues lysine 123–threonine 139 and glutamate 151–alanine 160. The interval lysine 123–alanine 178 is disordered. Over residues aspartate 161 to alanine 178 the composition is skewed to basic and acidic residues.

It belongs to the bacterial ribosomal protein bL17 family. In terms of assembly, part of the 50S ribosomal subunit. Contacts protein L32.

The protein is Large ribosomal subunit protein bL17 of Cutibacterium acnes (strain DSM 16379 / KPA171202) (Propionibacterium acnes).